Consider the following 290-residue polypeptide: 2-dehydro-3-deoxy-phosphogluconate/2-dehydro-3-deoxy-6-phosphogalactonate aldolase (290 aa).

Substrate contacts are provided by residues 42–43 (TT), 129–131 (YNY), and 155–157 (KDT). The active-site Schiff-base intermediate with substrate is the lysine 155.

It belongs to the DapA family. KDPG aldolase subfamily. Homotetramer; dimer of dimers.

The catalysed reaction is 2-dehydro-3-deoxy-6-phospho-D-gluconate = D-glyceraldehyde 3-phosphate + pyruvate. It catalyses the reaction 2-dehydro-3-deoxy-6-phospho-D-galactonate = D-glyceraldehyde 3-phosphate + pyruvate. The protein operates within carbohydrate acid metabolism; 2-dehydro-3-deoxy-D-gluconate degradation; D-glyceraldehyde 3-phosphate and pyruvate from 2-dehydro-3-deoxy-D-gluconate: step 2/2. Involved in the degradation of glucose and galactose via the Entner-Doudoroff pathway. Catalyzes the reversible cleavage of 2-keto-3-deoxy-6-phosphogluconate (KDPG) and 2-keto-3-deoxygluconate (KDG) forming pyruvate and glyceraldehyde 3-phosphate or glyceraldehyde, respectively. It is also able to catalyze the reversible cleavage of 2-keto-3-deoxy-6-phosphogalactonate (KDPGal) and 2-keto-3-deoxygalactonate (KDGal). In Sulfurisphaera tokodaii (strain DSM 16993 / JCM 10545 / NBRC 100140 / 7) (Sulfolobus tokodaii), this protein is 2-dehydro-3-deoxy-phosphogluconate/2-dehydro-3-deoxy-6-phosphogalactonate aldolase (kdgA).